The primary structure comprises 295 residues: Ethanolamine ammonia-lyase small subunit (295 aa).

Adenosylcob(III)alamin-binding residues include valine 208 and glutamate 229.

Belongs to the EutC family. In terms of assembly, the basic unit is a heterodimer which dimerizes to form tetramers. The heterotetramers trimerize; 6 large subunits form a core ring with 6 small subunits projecting outwards. The cofactor is adenosylcob(III)alamin.

It localises to the bacterial microcompartment. It carries out the reaction ethanolamine = acetaldehyde + NH4(+). It participates in amine and polyamine degradation; ethanolamine degradation. In terms of biological role, catalyzes the deamination of various vicinal amino-alcohols to oxo compounds. Allows this organism to utilize ethanolamine as the sole source of nitrogen and carbon in the presence of external vitamin B12. The polypeptide is Ethanolamine ammonia-lyase small subunit (Fusobacterium nucleatum subsp. nucleatum (strain ATCC 25586 / DSM 15643 / BCRC 10681 / CIP 101130 / JCM 8532 / KCTC 2640 / LMG 13131 / VPI 4355)).